The primary structure comprises 833 residues: Lon protease (833 aa).

One can recognise a Lon N-terminal domain in the interval 3–198 (YPFMATRGVI…LIFSFLVELK (196 aa)). An ATP-binding site is contributed by 390–397 (GPPGTGKT). In terms of domain architecture, Lon proteolytic spans 627-808 (YERIGAVNGL…DEIFENLFGK (182 aa)). Catalysis depends on residues serine 714 and lysine 757.

This sequence belongs to the peptidase S16 family. In terms of assembly, homohexamer. Organized in a ring with a central cavity.

It is found in the cytoplasm. The catalysed reaction is Hydrolysis of proteins in presence of ATP.. ATP-dependent serine protease that mediates the selective degradation of mutant and abnormal proteins as well as certain short-lived regulatory proteins. Required for cellular homeostasis and for survival from DNA damage and developmental changes induced by stress. Degrades polypeptides processively to yield small peptide fragments that are 5 to 10 amino acids long. Binds to DNA in a double-stranded, site-specific manner. The chain is Lon protease from Mycoplasma mobile (strain ATCC 43663 / 163K / NCTC 11711) (Mesomycoplasma mobile).